The following is a 121-amino-acid chain: Large ribosomal subunit protein uL14 (121 aa).

The protein belongs to the universal ribosomal protein uL14 family. In terms of assembly, part of the 50S ribosomal subunit. Forms a cluster with proteins L3 and L19. In the 70S ribosome, L14 and L19 interact and together make contacts with the 16S rRNA in bridges B5 and B8.

Binds to 23S rRNA. Forms part of two intersubunit bridges in the 70S ribosome. This is Large ribosomal subunit protein uL14 from Synechococcus sp. (strain CC9311).